The following is a 554-amino-acid chain: RecBCD enzyme subunit RecD (554 aa).

An ATP-binding site is contributed by 155–162 (GGPGTGKT).

Belongs to the RecD family. In terms of assembly, heterotrimer of RecB, RecC and RecD. All subunits contribute to DNA-binding.

The enzyme catalyses Couples ATP hydrolysis with the unwinding of duplex DNA at the replication fork by translocating in the 5'-3' direction. This creates two antiparallel DNA single strands (ssDNA). The leading ssDNA polymer is the template for DNA polymerase III holoenzyme which synthesizes a continuous strand.. The catalysed reaction is ATP + H2O = ADP + phosphate + H(+). In terms of biological role, a helicase/nuclease that prepares dsDNA breaks (DSB) for recombinational DNA repair. Binds to DSBs and unwinds DNA via a highly rapid and processive ATP-dependent bidirectional helicase activity. Holoenzyme degrades any linearized DNA that is unable to undergo homologous recombination. In the holoenzyme this subunit has ssDNA-dependent ATPase and 5'-3' helicase activity. When added to pre-assembled RecBC greatly stimulates nuclease activity and augments holoenzyme processivity. Unlike the case in E.coli, suppresses RecA-dependent homologous recombination, is instead required for single-strand annealing pathway repair of DSB. This is RecBCD enzyme subunit RecD from Mycolicibacterium smegmatis (strain ATCC 700084 / mc(2)155) (Mycobacterium smegmatis).